The sequence spans 466 residues: 55 kDa erythrocyte membrane protein (466 aa).

An N-acetylthreonine modification is found at threonine 2. Phosphoserine is present on residues serine 13 and serine 19. Position 49 is a phosphothreonine (threonine 49). Serine 52, serine 57, and serine 110 each carry phosphoserine. Positions leucine 71–glutamine 152 constitute a PDZ domain. Residues alanine 158–valine 228 enclose the SH3 domain. Serine 243 bears the Phosphoserine mark. Positions valine 268–tyrosine 466 are interaction with PALS1. One can recognise a Guanylate kinase-like domain in the interval arginine 282–aspartate 451.

Belongs to the MAGUK family. Heterodimer with PALS1. Interacts with DLG5 and NF2. Interacts (via guanylate kinase-like domain) with WHRN (via third PDZ domain). Palmitoylated. Ubiquitous.

It is found in the cell membrane. The protein resides in the cell projection. Its subcellular location is the stereocilium. Functionally, essential regulator of neutrophil polarity. Regulates neutrophil polarization by regulating AKT1 phosphorylation through a mechanism that is independent of PIK3CG activity. This chain is 55 kDa erythrocyte membrane protein (MPP1), found in Homo sapiens (Human).